The primary structure comprises 343 residues: MGNLPSAAKHCLNYQQLLREHLWSGESVAGALDPAQEASQLSGLPEYVKIVEVGPRDGLQNEKVIVPTDIKIEFINQLSQTGLSVIEVTSFVSSRWVPQMADHAEVMGGIHQYPGVRYPVLVPNLQGLQHAVAAGATEIAVFGAASESFSKKNINCSIEESMGRFEQVISSARHMNIPVRGYVSCALGCPYEGSIMPQKVTEVSKRLYSMGCYEISLGDTVGVGTPGSMKTMLESVMKEIPPGALAVHCHDTYGQALANILTALQMGINVVDSAVSGLGGCPYAKGASGNVATEDLIYMLNGMGLNTGVDLHKVMEAGDFICKAVNKTTNSKVAQASFKARLE.

A lipid anchor (N-myristoyl glycine) is attached at glycine 2. Residues valine 48–methionine 315 form the Pyruvate carboxyltransferase domain. Arginine 56 is a binding site for substrate. The a divalent metal cation site is built by aspartate 57, histidine 248, and histidine 250. Residue cysteine 281 is part of the active site. Asparagine 290 is a binding site for a divalent metal cation.

This sequence belongs to the HMG-CoA lyase family. The cofactor is a divalent metal cation. Present at high level in duodenum and small intestine (at protein level).

The protein resides in the cytoplasm. It localises to the cytosol. It is found in the endoplasmic reticulum membrane. It carries out the reaction (3S)-3-hydroxy-3-methylglutaryl-CoA = acetoacetate + acetyl-CoA. The protein operates within metabolic intermediate metabolism; (S)-3-hydroxy-3-methylglutaryl-CoA degradation; acetoacetate from (S)-3-hydroxy-3-methylglutaryl-CoA: step 1/1. In terms of biological role, non-mitochondrial 3-hydroxy-3-methylglutaryl-CoA lyase that catalyzes a cation-dependent cleavage of (S)-3-hydroxy-3-methylglutaryl-CoA into acetyl-CoA and acetoacetate, a key step in ketogenesis, the products of which support energy production in nonhepatic animal tissues. The protein is 3-hydroxy-3-methylglutaryl-CoA lyase, cytoplasmic (Hmgcll1) of Rattus norvegicus (Rat).